A 343-amino-acid polypeptide reads, in one-letter code: MPINCKSQCGNRAALKRPKTGDALCKECFFAAFEAEIHHTISSSNLFRRGEKVAVAASGGKDSTVLAHVLKLLNERHNYGLELVLLSIDEGITGYRDDSLETVKQNRDDYQMPLKILSYEELYGWTMDRIVAQIGRSNNCTFCGVFRRQALDRGAKLLGVDSIATGHNADDIAETVLMNVLRGDTARLRRCTSIRTGGGEDTIPRVKPLKYSYEKEIVMYAHYKKLVYFSTECVFAPNAYRGHARAFLKDLEKVRPSVIMDIIYSGEQLRFKDTVKKPERGICTRCGFVSSQQPCKACVLLEGLNRGLPKLGIGKKSKGERMIAKQDQELALRERANLVKNDF.

This sequence belongs to the TtcA family. CTU1/NCS6/ATPBD3 subfamily.

It localises to the cytoplasm. Its pathway is tRNA modification; 5-methoxycarbonylmethyl-2-thiouridine-tRNA biosynthesis. In terms of biological role, plays a central role in 2-thiolation of mcm(5)S(2)U at tRNA wobble positions of tRNA(Lys), tRNA(Glu) and tRNA(Gln). Directly binds tRNAs and probably acts by catalyzing adenylation of tRNAs, an intermediate required for 2-thiolation. It is unclear whether it acts as a sulfurtransferase that transfers sulfur from thiocarboxylated URM1 onto the uridine of tRNAs at wobble position. This Drosophila erecta (Fruit fly) protein is Cytoplasmic tRNA 2-thiolation protein 1.